A 94-amino-acid chain; its full sequence is Integration host factor subunit beta (94 aa).

Belongs to the bacterial histone-like protein family. Heterodimer of an alpha and a beta chain.

This protein is one of the two subunits of integration host factor, a specific DNA-binding protein that functions in genetic recombination as well as in transcriptional and translational control. In Escherichia coli (strain UTI89 / UPEC), this protein is Integration host factor subunit beta.